Consider the following 306-residue polypeptide: Homoserine O-acetyltransferase (306 aa).

C142 acts as the Acyl-thioester intermediate in catalysis. Residues K163 and S192 each contribute to the substrate site. The Proton acceptor role is filled by H235. Residue E237 is part of the active site. Residue R249 coordinates substrate.

Belongs to the MetA family.

Its subcellular location is the cytoplasm. It catalyses the reaction L-homoserine + acetyl-CoA = O-acetyl-L-homoserine + CoA. Its pathway is amino-acid biosynthesis; L-methionine biosynthesis via de novo pathway; O-acetyl-L-homoserine from L-homoserine: step 1/1. In terms of biological role, transfers an acetyl group from acetyl-CoA to L-homoserine, forming acetyl-L-homoserine. This Brevibacillus brevis (strain 47 / JCM 6285 / NBRC 100599) protein is Homoserine O-acetyltransferase.